A 280-amino-acid polypeptide reads, in one-letter code: Dehydrogenase/reductase SDR family member 2, mitochondrial (280 aa).

Residues 1-23 constitute a mitochondrion transit peptide; it reads MLSAVARGYQGWFHPCARLSVRM. Positions 46 and 48 each coordinate NAD(+). At lysine 96 the chain carries N6-acetyllysine; alternate. Lysine 96 is modified (N6-succinyllysine; alternate). Substrate is bound at residue serine 172. 2 residues coordinate NAD(+): tyrosine 185 and lysine 189. Tyrosine 185 (proton acceptor) is an active-site residue. Residue lysine 219 is modified to N6-acetyllysine; alternate. The residue at position 219 (lysine 219) is an N6-succinyllysine; alternate. Threonine 220 contributes to the NAD(+) binding site. Phosphoserine is present on serine 223. N6-succinyllysine is present on lysine 237.

The protein belongs to the short-chain dehydrogenases/reductases (SDR) family. Directly interacts with MDM2; this interaction occurs in the nucleus and does not target DHRS2 to degradation. In terms of tissue distribution, widely expressed, with highest levels in liver and kidney, followed by heart, spleen, skeletal muscle and placenta. In hemopoietic cells, expressed in dendritic cells, but not in monocytes, macrophages, granulocytes, nor in B and T lymphocytes.

The protein resides in the mitochondrion matrix. The protein localises to the nucleus. NADPH-dependent oxidoreductase which catalyzes the reduction of dicarbonyl compounds. Displays reductase activity in vitro with 3,4-hexanedione, 2,3-heptanedione and 1-phenyl-1,2-propanedione as substrates. May function as a dicarbonyl reductase in the enzymatic inactivation of reactive carbonyls involved in covalent modification of cellular components. Also displays a minor hydroxysteroid dehydrogenase activity toward bile acids such as ursodeoxycholic acid (UDCA) and isoursodeoxycholic acid (isoUDCA), which makes it unlikely to control hormone levels. Doesn't show any activity in vitro with retinoids and sugars as substrates. Attenuates MDM2-mediated p53/TP53 degradation, leading to p53/TP53 stabilization and increased transcription activity, resulting in the accumulation of MDM2 and CDKN1A/p21. Reduces proliferation, migration and invasion of cancer cells and well as the production of ROS in cancer. In Homo sapiens (Human), this protein is Dehydrogenase/reductase SDR family member 2, mitochondrial.